The chain runs to 215 residues: 3-demethoxyubiquinol 3-hydroxylase (215 aa).

Positions 64, 94, 97, 146, 178, and 181 each coordinate Fe cation.

Belongs to the COQ7 family. It depends on Fe cation as a cofactor.

It is found in the cell membrane. It catalyses the reaction a 5-methoxy-2-methyl-3-(all-trans-polyprenyl)benzene-1,4-diol + AH2 + O2 = a 3-demethylubiquinol + A + H2O. It functions in the pathway cofactor biosynthesis; ubiquinone biosynthesis. Catalyzes the hydroxylation of 2-nonaprenyl-3-methyl-6-methoxy-1,4-benzoquinol during ubiquinone biosynthesis. This is 3-demethoxyubiquinol 3-hydroxylase from Coxiella burnetii (strain RSA 331 / Henzerling II).